The following is a 29-amino-acid chain: Cyclotide mden-B (29 aa).

The segment at residues 1 to 29 (GLPICGETCFTGKCYTPGCTCSYPICKKN) is a cross-link (cyclopeptide (Gly-Asn)). 3 disulfide bridges follow: C5-C19, C9-C21, and C14-C26.

It belongs to the cyclotide family. Moebius subfamily. This is a cyclic peptide.

Probably participates in a plant defense mechanism. This is Cyclotide mden-B from Melicytus dentatus (Tree violet).